The sequence spans 91 residues: UPF0728 protein v1g117062 (91 aa).

This sequence belongs to the UPF0728 family.

This chain is UPF0728 protein v1g117062, found in Nematostella vectensis (Starlet sea anemone).